Reading from the N-terminus, the 83-residue chain is Mu-theraphotoxin-Hhn2j 4 (83 aa).

The first 21 residues, 1–21, serve as a signal peptide directing secretion; the sequence is MKASMFLALAGLVLLFVVGYA. A propeptide spanning residues 22–48 is cleaved from the precursor; the sequence is SESEEKEFPIELLSKIFAVDVFKGEGR. Disulfide bonds link C50/C65, C57/C70, and C64/C77. L81 carries the leucine amide modification.

The protein belongs to the neurotoxin 10 (Hwtx-1) family. 15 (Hntx-3) subfamily. As to quaternary structure, monomer. Expressed by the venom gland.

It localises to the secreted. Functionally, lethal neurotoxin. Selectively blocks tetrodotoxin-sensitive voltage-gated sodium channels (Nav). Does not affect tetrodotoxin-resistant voltage-gated sodium channels or calcium channels. The chain is Mu-theraphotoxin-Hhn2j 4 from Cyriopagopus hainanus (Chinese bird spider).